The chain runs to 1388 residues: DNA-directed RNA polymerase subunit beta' (1388 aa).

Residues Cys-76, Cys-78, Cys-91, and Cys-94 each coordinate Zn(2+). Mg(2+) contacts are provided by Asp-467, Asp-469, and Asp-471. Zn(2+)-binding residues include Cys-810, Cys-884, Cys-891, and Cys-894.

Belongs to the RNA polymerase beta' chain family. The RNAP catalytic core consists of 2 alpha, 1 beta, 1 beta' and 1 omega subunit. When a sigma factor is associated with the core the holoenzyme is formed, which can initiate transcription. Mg(2+) serves as cofactor. Zn(2+) is required as a cofactor.

The catalysed reaction is RNA(n) + a ribonucleoside 5'-triphosphate = RNA(n+1) + diphosphate. In terms of biological role, DNA-dependent RNA polymerase catalyzes the transcription of DNA into RNA using the four ribonucleoside triphosphates as substrates. The polypeptide is DNA-directed RNA polymerase subunit beta' (Lawsonia intracellularis (strain PHE/MN1-00)).